The following is a 419-amino-acid chain: Tyrosine--tRNA ligase (419 aa).

Tyr34 is an L-tyrosine binding site. Residues 39–48 (PSGDSMHIGH) carry the 'HIGH' region motif. 2 residues coordinate L-tyrosine: Tyr168 and Gln172. The 'KMSKS' region motif lies at 230–234 (KFGKS). Residue Lys233 participates in ATP binding. Residues 352–418 (ANLVDWLVTL…GKKKYFLVSY (67 aa)) form the S4 RNA-binding domain.

The protein belongs to the class-I aminoacyl-tRNA synthetase family. TyrS type 1 subfamily. As to quaternary structure, homodimer.

It is found in the cytoplasm. It carries out the reaction tRNA(Tyr) + L-tyrosine + ATP = L-tyrosyl-tRNA(Tyr) + AMP + diphosphate + H(+). Its function is as follows. Catalyzes the attachment of tyrosine to tRNA(Tyr) in a two-step reaction: tyrosine is first activated by ATP to form Tyr-AMP and then transferred to the acceptor end of tRNA(Tyr). The sequence is that of Tyrosine--tRNA ligase from Listeria monocytogenes serotype 4a (strain HCC23).